A 339-amino-acid chain; its full sequence is Hairy/enhancer-of-split related with YRPW motif protein 2 (339 aa).

The interval 1 to 52 (MKRPCEETTSESDLDETIDVGSENNYPGHATSSVMRSNSPTTTSQIMARKKR) is disordered. The segment covering 8 to 18 (TTSESDLDETI) has biased composition (acidic residues). The segment covering 22-46 (SENNYPGHATSSVMRSNSPTTTSQI) has biased composition (polar residues). The transcriptional repression and interaction with NCOR1 and SIN3A stretch occupies residues 47–116 (MARKKRRGII…GGKGYFDAHA (70 aa)). Residues 48–103 (ARKKRRGIIEKRRRDRINNSLSELRRLVPTAFEKQGSAKLEKAEILQMTVDHLKML) form the bHLH domain. Residues 122–157 (MSIGFRECLTEVARYLSSVEGLDPSDPLRVRLVSHL) enclose the Orange domain. Residues 310-339 (SVSAASSPQQTSTGTNNKPYQPWGTEVGAF) form a disordered region. A compositionally biased stretch (polar residues) spans 318–328 (QQTSTGTNNKP). The YQPW motif motif lies at 329–332 (YQPW).

It belongs to the HEY family. As to quaternary structure, may self-associate. Interacts with ARNT. Interacts with GATA4, GATA6, HES1 and HEYL. Interacts with HDAC1, NCOR1 and SIN3A. Highly expressed in the aorta, lower expression detected in the heart, brain, kidney, lung, muscle, ovary and testis.

The protein resides in the nucleus. Transcriptional repressor which functions as a downstream effector of Notch signaling in cardiovascular development. Specifically required for the Notch-induced endocardial epithelial to mesenchymal transition, which is itself criticial for cardiac valve and septum development. May be required in conjunction with HEY1 to specify arterial cell fate or identity. Promotes maintenance of neuronal precursor cells and glial versus neuronal fate specification. Binds preferentially to the canonical E box sequence 5'-CACGTG-3'. Represses transcription by the cardiac transcriptional activators GATA4 and GATA6 and by the neuronal bHLH factors ASCL1/MASH1 and NEUROD4/MATH3. In Mus musculus (Mouse), this protein is Hairy/enhancer-of-split related with YRPW motif protein 2 (Hey2).